The sequence spans 110 residues: U1-lycotoxin-Ls1dd (110 aa).

A signal peptide spans 1–20 (MKFVLLFGVLLVTLFSYSSA). Residues 21-44 (EMLDDFDQADEDELLSLIEKEEAR) constitute a propeptide that is removed on maturation. Disulfide bonds link Cys47–Cys62, Cys54–Cys71, Cys61–Cys89, and Cys73–Cys87.

It belongs to the neurotoxin 19 (CSTX) family. 03 subfamily. As to expression, expressed by the venom gland.

Its subcellular location is the secreted. This Lycosa singoriensis (Wolf spider) protein is U1-lycotoxin-Ls1dd.